Consider the following 285-residue polypeptide: 4-hydroxybenzoate octaprenyltransferase (285 aa).

8 helical membrane passes run 28–48 (LWAL…CIFF), 86–106 (IAAW…FALI), 110–130 (NSLT…YPFF), 133–153 (FFAI…PMAF), 160–180 (VPLV…AYDT), 207–227 (VAAI…AGVM), 232–252 (WPYW…YTLI), and 262–284 (AAFR…AYAI).

This sequence belongs to the UbiA prenyltransferase family. Mg(2+) is required as a cofactor.

It localises to the cell inner membrane. It catalyses the reaction all-trans-octaprenyl diphosphate + 4-hydroxybenzoate = 4-hydroxy-3-(all-trans-octaprenyl)benzoate + diphosphate. It functions in the pathway cofactor biosynthesis; ubiquinone biosynthesis. Its function is as follows. Catalyzes the prenylation of para-hydroxybenzoate (PHB) with an all-trans polyprenyl group. Mediates the second step in the final reaction sequence of ubiquinone-8 (UQ-8) biosynthesis, which is the condensation of the polyisoprenoid side chain with PHB, generating the first membrane-bound Q intermediate 3-octaprenyl-4-hydroxybenzoate. This chain is 4-hydroxybenzoate octaprenyltransferase, found in Cupriavidus pinatubonensis (strain JMP 134 / LMG 1197) (Cupriavidus necator (strain JMP 134)).